The sequence spans 59 residues: Cecropin-C type 1 (59 aa).

The N-terminal stretch at 1 to 23 (MNFTKIFVLIAMAALLLVGQSEA) is a signal peptide.

It localises to the secreted. Its function is as follows. Cecropins have lytic and antibacterial activity against several Gram-positive and Gram-negative bacteria. This Aedes albopictus (Asian tiger mosquito) protein is Cecropin-C type 1 (CECC1).